A 250-amino-acid chain; its full sequence is Eukaryotic translation initiation factor 3 subunit K (250 aa).

In terms of domain architecture, PCI spans 46-229 (FDCYANLALL…KENEARSEVK (184 aa)).

This sequence belongs to the eIF-3 subunit K family. Component of the eukaryotic translation initiation factor 3 (eIF-3) complex.

Its subcellular location is the cytoplasm. Its function is as follows. Component of the eukaryotic translation initiation factor 3 (eIF-3) complex, which is involved in protein synthesis of a specialized repertoire of mRNAs and, together with other initiation factors, stimulates binding of mRNA and methionyl-tRNAi to the 40S ribosome. The eIF-3 complex specifically targets and initiates translation of a subset of mRNAs involved in cell proliferation. The chain is Eukaryotic translation initiation factor 3 subunit K from Emericella nidulans (strain FGSC A4 / ATCC 38163 / CBS 112.46 / NRRL 194 / M139) (Aspergillus nidulans).